A 133-amino-acid chain; its full sequence is Interleukin-4 (133 aa).

The first 24 residues, 1–24, serve as a signal peptide directing secretion; sequence MGLTSQLIPMLVCLLACTSNFVHG. 3 cysteine pairs are disulfide-bonded: Cys-27-Cys-133, Cys-48-Cys-85, and Cys-70-Cys-105. Asn-62, Asn-96, and Asn-102 each carry an N-linked (GlcNAc...) asparagine glycan.

This sequence belongs to the IL-4/IL-13 family.

It localises to the secreted. Its function is as follows. Participates in at least several B-cell activation processes as well as of other cell types. It is a costimulator of DNA-synthesis. It induces the expression of class II MHC molecules on resting B-cells. It enhances both secretion and cell surface expression of IgE and IgG1. It also regulates the expression of the low affinity Fc receptor for IgE (CD23) on both lymphocytes and monocytes. Positively regulates IL31RA expression in macrophages. Stimulates autophagy in dendritic cells by interfering with mTORC1 signaling and through the induction of RUFY4. This is Interleukin-4 (IL4) from Tursiops truncatus (Atlantic bottle-nosed dolphin).